The chain runs to 534 residues: Major facilitator-type transporter sor6 (534 aa).

2 N-linked (GlcNAc...) asparagine glycosylation sites follow: Asn29 and Asn36. The next 12 membrane-spanning stretches (helical) occupy residues 66–86, 103–123, 160–180, 182–202, 209–229, 241–261, 318–338, 354–374, 395–415, 424–444, 456–476, and 486–506; these read WFLT…SSAY, LFIT…AVWG, AMVA…LIVL, FLAG…IADL, GLAM…GPIV, WVQG…VIFV, IVLI…MFLG, FGGL…GYAI, LPPA…FAWT, VSIV…LPIV, ASVL…FPLF, and IHWA…FPFF.

The protein belongs to the major facilitator superfamily. Sugar transporter (TC 2.A.1.1) family.

It is found in the membrane. In terms of biological role, major facilitator-type transporter; part of the gene cluster that mediates the biosynthesis of sorbicillinoids, a diverse group of yellow secondary metabolites that restrict growth of competing pathogenic fungi but not of bacteria. This is Major facilitator-type transporter sor6 from Hypocrea jecorina (strain QM6a) (Trichoderma reesei).